Here is a 737-residue protein sequence, read N- to C-terminus: tRNA-dihydrouridine(47) synthase [NAD(P)(+)] (737 aa).

Basic and acidic residues-rich tracts occupy residues 1–11 (MESQETAKRPI) and 24–33 (PATKRVKLDD). Residues 1–127 (MESQETAKRP…GKKKRPKGQN (127 aa)) are disordered. Over residues 35–44 (PVPQIQEEPS) the composition is skewed to low complexity. Residues 57-82 (EDEKPTEQRQDDRDKRRGIAPIKKEY) show a composition bias toward basic and acidic residues. C3H1-type zinc fingers lie at residues 142–166 (CNSV…NALH) and 187–208 (CPVW…VESH). FMN is bound by residues 332–334 (PLT) and Gln-407. Residue Cys-439 is the Proton donor of the active site. FMN-binding positions include Lys-479, His-520, 577 to 579 (NGD), and 601 to 602 (GR).

This sequence belongs to the Dus family. Dus3 subfamily. Requires FMN as cofactor.

It localises to the cytoplasm. It is found in the nucleus. The catalysed reaction is 5,6-dihydrouridine(47) in tRNA + NAD(+) = uridine(47) in tRNA + NADH + H(+). It carries out the reaction 5,6-dihydrouridine(47) in tRNA + NADP(+) = uridine(47) in tRNA + NADPH + H(+). The enzyme catalyses a 5,6-dihydrouridine in mRNA + NAD(+) = a uridine in mRNA + NADH + H(+). It catalyses the reaction a 5,6-dihydrouridine in mRNA + NADP(+) = a uridine in mRNA + NADPH + H(+). Functionally, catalyzes the synthesis of dihydrouridine, a modified base found in the D-loop of most tRNAs. Specifically modifies U47 in cytoplasmic tRNAs. Catalyzes the synthesis of dihydrouridine in some mRNAs, thereby affecting their translation. This Neurospora crassa (strain ATCC 24698 / 74-OR23-1A / CBS 708.71 / DSM 1257 / FGSC 987) protein is tRNA-dihydrouridine(47) synthase [NAD(P)(+)] (dus-3).